The sequence spans 201 residues: Adenylyl-sulfate kinase (201 aa).

35–42 contacts ATP; that stretch reads GLSGSGKS. The active-site Phosphoserine intermediate is Ser-109.

The protein belongs to the APS kinase family.

The enzyme catalyses adenosine 5'-phosphosulfate + ATP = 3'-phosphoadenylyl sulfate + ADP + H(+). It functions in the pathway sulfur metabolism; hydrogen sulfide biosynthesis; sulfite from sulfate: step 2/3. In terms of biological role, catalyzes the synthesis of activated sulfate. The sequence is that of Adenylyl-sulfate kinase from Shigella boydii serotype 18 (strain CDC 3083-94 / BS512).